A 326-amino-acid polypeptide reads, in one-letter code: 4-hydroxythreonine-4-phosphate dehydrogenase (326 aa).

Thr-132 is a substrate binding site. Positions 160, 205, and 260 each coordinate a divalent metal cation. Positions 268, 277, and 286 each coordinate substrate.

Belongs to the PdxA family. In terms of assembly, homodimer. Zn(2+) serves as cofactor. It depends on Mg(2+) as a cofactor. Co(2+) is required as a cofactor.

It is found in the cytoplasm. The catalysed reaction is 4-(phosphooxy)-L-threonine + NAD(+) = 3-amino-2-oxopropyl phosphate + CO2 + NADH. It functions in the pathway cofactor biosynthesis; pyridoxine 5'-phosphate biosynthesis; pyridoxine 5'-phosphate from D-erythrose 4-phosphate: step 4/5. Catalyzes the NAD(P)-dependent oxidation of 4-(phosphooxy)-L-threonine (HTP) into 2-amino-3-oxo-4-(phosphooxy)butyric acid which spontaneously decarboxylates to form 3-amino-2-oxopropyl phosphate (AHAP). This chain is 4-hydroxythreonine-4-phosphate dehydrogenase, found in Stenotrophomonas maltophilia (strain R551-3).